The sequence spans 389 residues: Urea transporter 1 (389 aa).

5 helical membrane passes run 53-73 (PVVLQFIDWILRGISQVVFVN), 91-110 (WWALTGWLGTVVSTLMALLL), 116-136 (LIASGLYGYNATLVGVLMAVF), 143-163 (FWWLLLPVCAMSMTCPIFSSA), and 173-193 (LPVFTLPFNMALSMYLSATGH). Asn211 carries an N-linked (GlcNAc...) asparagine glycan. Helical transmembrane passes span 242 to 262 (GGIFLGAILLSSPLMCLHAAI), 281 to 301 (IYFGLWGFNSSLACIAMGGMF), 310 to 330 (LLALGCALFTAYLGVGMANFM), and 333 to 353 (VGLPACTWPFCLATLLFLIMT).

Belongs to the urea transporter family. As to quaternary structure, homotrimer; each subunit contains a pore through which urea permeates. Identified in a complex with STOM. Detected in erythrocytes (at protein level). Expressed in spleen erythroblasts and tumoral kidney.

It is found in the cell membrane. It localises to the basolateral cell membrane. It catalyses the reaction urea(in) = urea(out). Its activity is regulated as follows. Inhibited by phloretin and para-chloromercuribenzene sulfonate. In terms of biological role, mediates the transport of urea driven by a concentration gradient across the cell membrane of erythrocytes. Also mediates the transport of urea across the cell membrane of the renal inner medullary collecting duct which is critical to the urinary concentrating mechanism. Facilitates water transport in erythrocytes. This Homo sapiens (Human) protein is Urea transporter 1 (SLC14A1).